The sequence spans 142 residues: Large ribosomal subunit protein uL16 (142 aa).

The protein belongs to the universal ribosomal protein uL16 family. As to quaternary structure, part of the 50S ribosomal subunit.

Binds 23S rRNA and is also seen to make contacts with the A and possibly P site tRNAs. The chain is Large ribosomal subunit protein uL16 from Phenylobacterium zucineum (strain HLK1).